A 331-amino-acid polypeptide reads, in one-letter code: Pantothenate kinase (331 aa).

109–116 is a binding site for ATP; sequence GSVAVGKS.

The protein belongs to the prokaryotic pantothenate kinase family.

The protein resides in the cytoplasm. The catalysed reaction is (R)-pantothenate + ATP = (R)-4'-phosphopantothenate + ADP + H(+). Its pathway is cofactor biosynthesis; coenzyme A biosynthesis; CoA from (R)-pantothenate: step 1/5. This Rhizobium meliloti (strain 1021) (Ensifer meliloti) protein is Pantothenate kinase.